A 433-amino-acid chain; its full sequence is Serine hydroxymethyltransferase (433 aa).

Position 121-123 (121-123 (AHV)) interacts with (6S)-5,6,7,8-tetrahydrofolate. Lysine 227 bears the N6-(pyridoxal phosphate)lysine mark. Glutamate 243 is a (6S)-5,6,7,8-tetrahydrofolate binding site.

This sequence belongs to the SHMT family. As to quaternary structure, homodimer. Pyridoxal 5'-phosphate is required as a cofactor.

It is found in the cytoplasm. It functions in the pathway amino-acid biosynthesis; glycine biosynthesis; glycine from L-serine: step 1/1. In terms of biological role, catalyzes the reversible interconversion of serine and glycine with a modified folate serving as the one-carbon carrier. Also exhibits a pteridine-independent aldolase activity toward beta-hydroxyamino acids, producing glycine and aldehydes, via a retro-aldol mechanism. The chain is Serine hydroxymethyltransferase from Saccharolobus islandicus (strain Y.G.57.14 / Yellowstone #1) (Sulfolobus islandicus).